A 64-amino-acid polypeptide reads, in one-letter code: Large ribosomal subunit protein bL35 (64 aa).

Residues 1-55 (MPKMKSNKSVAARFKLTGSGQLKRTRPGKRHKLSKRSSQQKRNLSKQPLVDQGQV) form a disordered region. Over residues 23–39 (KRTRPGKRHKLSKRSSQ) the composition is skewed to basic residues.

Belongs to the bacterial ribosomal protein bL35 family.

In Chlamydia muridarum (strain MoPn / Nigg), this protein is Large ribosomal subunit protein bL35.